The primary structure comprises 437 residues: ATP-dependent RNA helicase RhlB (437 aa).

Residues 9-37 (QKFADLGLEPTVLEGLDAQGFHYCTPIQA) carry the Q motif motif. Residues 40–219 (LPVVLTGQDI…FEHMNSPESV (180 aa)) enclose the Helicase ATP-binding domain. 53–60 (AQTGTGKT) lines the ATP pocket. Residues 165-168 (DEAD) carry the DEAD box motif. In terms of domain architecture, Helicase C-terminal spans 245 to 390 (RLLQTLIEEE…LSKYNSEALL (146 aa)). The disordered stretch occupies residues 395 to 437 (APLRLQRTPRQGGNRRPNGNRQGQGQSRPRNNNRRHPQSQKQQ). The span at 400–424 (QRTPRQGGNRRPNGNRQGQGQSRPR) shows a compositional bias: low complexity. The span at 425–437 (NNNRRHPQSQKQQ) shows a compositional bias: basic residues.

It belongs to the DEAD box helicase family. RhlB subfamily. As to quaternary structure, component of the RNA degradosome, which is a multiprotein complex involved in RNA processing and mRNA degradation.

It localises to the cytoplasm. The catalysed reaction is ATP + H2O = ADP + phosphate + H(+). DEAD-box RNA helicase involved in RNA degradation. Has RNA-dependent ATPase activity and unwinds double-stranded RNA. The protein is ATP-dependent RNA helicase RhlB of Photobacterium profundum (strain SS9).